A 480-amino-acid chain; its full sequence is Protein DETOXIFICATION 15 (480 aa).

Helical transmembrane passes span 36-56 (GPLI…VMFV), 69-89 (IATS…ASAM), 118-138 (LLSV…VFFG), 143-163 (IAHL…AYGL), 180-200 (VVIC…VLVL), 208-228 (GAAV…SCYV), 255-275 (LVIP…ELLV), 294-314 (VWMI…NELG), 326-346 (RVVL…LILI), 360-380 (VVSH…LDSF), 396-416 (IGAF…GLLL), and 428-448 (WLGI…ITFF).

It belongs to the multi antimicrobial extrusion (MATE) (TC 2.A.66.1) family.

It localises to the membrane. This chain is Protein DETOXIFICATION 15, found in Arabidopsis thaliana (Mouse-ear cress).